Reading from the N-terminus, the 295-residue chain is Small ribosomal subunit protein uS2 (295 aa).

Serine 2 bears the N-acetylserine mark. Serine 43 is subject to Phosphoserine. Lysine 52 is modified (N6-acetyllysine). Residues 54–113 (TWEKLLLAARAIVAIENPADVSVISSRNTGQRAVLKFAAATGATPIAGRFTPGTFTNQIQ) are interaction with PPP1R16B. Position 89 is an N6-acetyllysine; alternate (lysine 89). Lysine 89 is covalently cross-linked (Glycyl lysine isopeptide (Lys-Gly) (interchain with G-Cter in SUMO2); alternate). Phosphothreonine is present on threonine 97. Laminin-binding stretches follow at residues 161 to 180 (IPCNNKGAHSVGLMWWMLAR) and 205 to 229 (RDPEEIEKEEQAAAEKAVTKEEFQG). [DE]-W-[ST] repeat units follow at residues 230–232 (EWT), 247–249 (DWS), 266–268 (DWS), 275–277 (DWS), and 293–295 (EWS). The tract at residues 242 to 295 (QPEVADWSEGVQVPSVPIQQFPTEDWSAQPATEDWSAAPTAQATEWVGATTEWS) is laminin-binding. Residues 266–295 (DWSAQPATEDWSAAPTAQATEWVGATTEWS) are disordered.

This sequence belongs to the universal ribosomal protein uS2 family. As to quaternary structure, monomer (37LRP) and homodimer (67LR). Component of the small ribosomal subunit. Mature ribosomes consist of a small (40S) and a large (60S) subunit. The 40S subunit contains about 33 different proteins and 1 molecule of RNA (18S). The 60S subunit contains about 49 different proteins and 3 molecules of RNA (28S, 5.8S and 5S). Interacts with RPS21. Interacts with several laminins including at least LAMB1. Interacts with MDK. The mature dimeric form interacts with PPP1R16B (via its fourth ankyrin repeat). Interacts with PPP1CA only in the presence of PPP1R16B. Acylated. Acylation may be a prerequisite for conversion of the monomeric 37 kDa laminin receptor precursor (37LRP) to the mature dimeric 67 kDa laminin receptor (67LR), and may provide a mechanism for membrane association. Post-translationally, cleaved by stromelysin-3 (ST3) at the cell surface. Cleavage by stromelysin-3 may be a mechanism to alter cell-extracellular matrix interactions.

It localises to the cell membrane. It is found in the cytoplasm. Its subcellular location is the nucleus. Functionally, required for the assembly and/or stability of the 40S ribosomal subunit. Required for the processing of the 20S rRNA-precursor to mature 18S rRNA in a late step of the maturation of 40S ribosomal subunits. Also functions as a cell surface receptor for laminin. Plays a role in cell adhesion to the basement membrane and in the consequent activation of signaling transduction pathways. May play a role in cell fate determination and tissue morphogenesis. Also acts as a receptor for several other ligands, including the pathogenic prion protein, viruses, and bacteria. Acts as a PPP1R16B-dependent substrate of PPP1CA. The sequence is that of Small ribosomal subunit protein uS2 from Chlorocebus aethiops (Green monkey).